A 72-amino-acid chain; its full sequence is Large ribosomal subunit protein bL31 (72 aa).

Cysteine 17, cysteine 19, cysteine 37, and cysteine 40 together coordinate Zn(2+).

The protein belongs to the bacterial ribosomal protein bL31 family. Type A subfamily. In terms of assembly, part of the 50S ribosomal subunit. It depends on Zn(2+) as a cofactor.

Functionally, binds the 23S rRNA. The sequence is that of Large ribosomal subunit protein bL31 from Clostridium botulinum (strain Loch Maree / Type A3).